Here is a 362-residue protein sequence, read N- to C-terminus: Ferredoxin--NADP reductase, leaf-type isozyme, chloroplastic (362 aa).

Positions 1–20 (MATAVSAAVSLPSSKSTSFS) are disordered. The N-terminal 62 residues, 1–62 (MATAVSAAVS…RAQVTTEAPA (62 aa)), are a transit peptide targeting the chloroplast. Over residues 10–20 (SLPSSKSTSFS) the composition is skewed to low complexity. In terms of domain architecture, FAD-binding FR-type spans 83 to 205 (KEPYVGRCLL…TGPVGKEMLM (123 aa)). FAD is bound by residues 141–144 (RLYS), 162–164 (CVK), Tyr-168, 179–181 (VCS), and Thr-220. NADP(+) contacts are provided by Ser-144 and Lys-164. Residues Thr-220, 252 to 253 (VP), 282 to 283 (SR), Lys-292, 321 to 322 (GL), and Glu-360 each bind NADP(+).

Belongs to the ferredoxin--NADP reductase type 1 family. FAD is required as a cofactor.

It is found in the plastid. It localises to the chloroplast stroma. The protein resides in the chloroplast thylakoid membrane. The catalysed reaction is 2 reduced [2Fe-2S]-[ferredoxin] + NADP(+) + H(+) = 2 oxidized [2Fe-2S]-[ferredoxin] + NADPH. It participates in energy metabolism; photosynthesis. In terms of biological role, may play a key role in regulating the relative amounts of cyclic and non-cyclic electron flow to meet the demands of the plant for ATP and reducing power. This is Ferredoxin--NADP reductase, leaf-type isozyme, chloroplastic (PETH) from Nicotiana tabacum (Common tobacco).